The primary structure comprises 136 residues: Nanos homolog 2 (136 aa).

The disordered stretch occupies residues 27–51; it reads KQRQEGEVAEEPNSRPQEKSEQDLE. Over residues 28-48 the composition is skewed to basic and acidic residues; sequence QRQEGEVAEEPNSRPQEKSEQ. The Nanos-type zinc finger occupies 60–114; it reads ICNFCKHNGESRHVYTSHQLKTPEGVVVCPILRHYVCPLCGATGDQAHTLKYCPL. Cysteine 61, cysteine 64, histidine 77, cysteine 88, cysteine 96, cysteine 99, histidine 107, and cysteine 112 together coordinate Zn(2+). 2 consecutive short sequence motifs (C2HC) follow at residues 61–88 and 96–112; these read CNFC…VVVC and CPLC…LKYC.

It belongs to the nanos family. As to quaternary structure, interacts with CNOT1, CNOT3, CNOT6L, CNOT7 and CNOT9. In terms of tissue distribution, predominantly expressed in male germ cells. Expressed in self-renewing spermatogonial stem cells and developing gonads.

The protein resides in the cytoplasm. It localises to the P-body. It is found in the perinuclear region. Plays a key role in the sexual differentiation of germ cells by promoting the male fate but suppressing the female fate. Represses the female fate pathways by suppressing meiosis, which in turn results in the promotion of the male fate. Maintains the suppression of meiosis by preventing STRA8 expression, which is required for premeiotic DNA replication, after CYP26B1 is decreased. Regulates the localization of the CCR4-NOT deadenylation complex to P-bodies and plays a role in recruiting the complex to trigger the degradation of mRNAs involved in meiosis. Required for the maintenance of the spermatogonial stem cell population. Not essential for the assembly of P-bodies but is required for the maintenance of their normal state. The chain is Nanos homolog 2 (Nanos2) from Mus musculus (Mouse).